A 1304-amino-acid polypeptide reads, in one-letter code: Splicing factor 3B subunit 1 (1304 aa).

Disordered regions lie at residues 100 to 119 and 124 to 148; these read QYDP…EDEY and RTMI…PKMN. A compositionally biased stretch (basic and acidic residues) spans 104 to 119; it reads FAEHRPPKIADREDEY. Residue Thr125 is modified to Phosphothreonine. Ser129 is modified (phosphoserine). Residue Lys141 is modified to N6-acetyllysine. Thr142 bears the Phosphothreonine mark. Citrulline is present on Arg157. Residues 173–360 form a disordered region; that stretch reads AEKAKAGELK…PVLTPGKTPI (188 aa). Residues 190–342 are U2AF homology region; mediates interaction with RBM39; that stretch reads SQPPSKRKRR…KRKSRWDETP (153 aa). A Phosphoserine modification is found at Ser194. Phosphothreonine is present on residues Thr203, Thr207, and Thr211. Lys214 bears the N6-acetyllysine; alternate mark. Lys214 is covalently cross-linked (Glycyl lysine isopeptide (Lys-Gly) (interchain with G-Cter in SUMO2); alternate). Thr223 and Thr227 each carry phosphothreonine. Residues 223-491 form an interaction with PPP1R8 region; sequence TPGHTPSLRW…VDESTLSPEE (269 aa). At Ser229 the chain carries Phosphoserine. Basic and acidic residues predominate over residues 231 to 241; that stretch reads RWDETPGRAKG. 8 positions are modified to phosphothreonine: Thr235, Thr244, Thr248, Thr257, Thr261, Thr267, Thr273, and Thr278. The residue at position 287 (Ser287) is a Phosphoserine. A compositionally biased stretch (basic and acidic residues) spans 291-304; it reads NRWDETPKTERDTP. 4 positions are modified to phosphothreonine: Thr296, Thr299, Thr303, and Thr313. Ser322 is subject to Phosphoserine. 2 positions are modified to phosphothreonine: Thr326 and Thr328. Ser332 is subject to Phosphoserine. The residue at position 341 (Thr341) is a Phosphothreonine. Residues 342–352 show a composition bias toward polar residues; it reads PASQMGGSTPV. Phosphoserine is present on residues Ser344 and Ser349. Residues Thr350 and Thr354 each carry the phosphothreonine modification. Position 400 is a phosphoserine (Ser400). Lys413 is covalently cross-linked (Glycyl lysine isopeptide (Lys-Gly) (interchain with G-Cter in SUMO2); alternate). Residue Lys413 forms a Glycyl lysine isopeptide (Lys-Gly) (interchain with G-Cter in SUMO1); alternate linkage. Residue Thr426 is modified to Phosphothreonine. Lys430 is covalently cross-linked (Glycyl lysine isopeptide (Lys-Gly) (interchain with G-Cter in SUMO2)). The residue at position 434 (Thr434) is a Phosphothreonine; by DYRK1A. Phosphothreonine is present on Thr436. Ser488 carries the phosphoserine modification. 11 HEAT repeats span residues 529–568, 569–603, 604–641, 643–677, 680–718, 763–801, 843–881, 1010–1048, 1052–1090, 1122–1160, and 1163–1201; these read GPLF…DLVR, PYVH…LAKA, AGLA…ALGI, SLLP…LMGC, LPHL…AATP, NYYT…TDGV, KVGA…NLGA, TPPI…RGAE, AREW…AIGP, TCSP…YIGE, and KDYI…GVYG. Residues 529–568 form an interaction with SF3B14 region; that stretch reads GPLFNQILPLLMSPTLEDQERHLLVKVIDRILYKLDDLVR. The interaction with PHF5A stretch occupies residues 547-550; that stretch reads QERH. N6-acetyllysine is present on residues Lys554 and Lys562. The segment at 1156 to 1157 is interaction with PHF5A; the sequence is EY. Residues 1248 to 1304 are interaction with SF3B3 and SF3B5; that stretch reads QYCLQGLFHPARKVRDVYWKIYNSIYIGSQDALIAHYPRIYNDDKNTYIRYELDYIL.

The protein belongs to the SF3B1 family. In terms of assembly, component of the 17S U2 SnRNP complex, a ribonucleoprotein complex that contains small nuclear RNA (snRNA) U2 and a number of specific proteins. Part of the SF3B subcomplex of the 17S U2 SnRNP complex. SF3B associates with the splicing subcomplex SF3A and a 12S RNA unit to form the U2 small nuclear ribonucleoproteins complex (U2 snRNP). Within the SF3B complex, interacts directly (via HEAT domain) with SF3B3, SF3B5, SF3B6 and (via HEAT domain) with PHF5A. The SF3B subcomplex interacts with U2AF2. Identified in the spliceosome C complex. Component of the minor (U12-type spliceosome) spliceosome. Within the minor spliceosome complex, interacts with SCNM1 and CRIPT. Component of the B-WICH complex, at least composed of SMARCA5/SNF2H, BAZ1B/WSTF, SF3B1, DEK, MYO1C, ERCC6, MYBBP1A and DDX21. Phosphorylated form interacts with PPP1R8. Interacts with PQBP1. Interacts with RBM17. Interacts with RBM39. Interacts with SETX. Interacts with RBM15. Interacts with USH1G. Interacts with SDE2. Interacts with U2AF1. Interacts with CACTIN. Interacts with ZRSR1. Interacts with CYREN. Post-translationally, phosphorylated. Phosphorylation occurs concomitantly with the splicing catalytic steps. Phosphorylation on Thr-244, Thr-248 and Thr-313 by cyclin-dependent kinases promotes interaction with PPP1R8 during mitosis. Citrullinated by PADI4.

It localises to the nucleus. Its subcellular location is the nucleus speckle. In terms of biological role, component of the 17S U2 SnRNP complex of the spliceosome, a large ribonucleoprotein complex that removes introns from transcribed pre-mRNAs. The 17S U2 SnRNP complex (1) directly participates in early spliceosome assembly and (2) mediates recognition of the intron branch site during pre-mRNA splicing by promoting the selection of the pre-mRNA branch-site adenosine, the nucleophile for the first step of splicing. Within the 17S U2 SnRNP complex, SF3B1 is part of the SF3B subcomplex, which is required for 'A' complex assembly formed by the stable binding of U2 snRNP to the branchpoint sequence in pre-mRNA. Sequence independent binding of SF3A and SF3B subcomplexes upstream of the branch site is essential, it may anchor U2 snRNP to the pre-mRNA. May also be involved in the assembly of the 'E' complex. Also acts as a component of the minor spliceosome, which is involved in the splicing of U12-type introns in pre-mRNAs. Together with other U2 snRNP complex components may also play a role in the selective processing of microRNAs (miRNAs) from the long primary miRNA transcript, pri-miR-17-92. This is Splicing factor 3B subunit 1 from Homo sapiens (Human).